Consider the following 579-residue polypeptide: Glucose starvation modulator protein 1 (579 aa).

The segment at residues 20 to 48 (CVFCHEKHLQCDLGRPCQNCSKRGIGDTC) is a DNA-binding region (zn(2)-C6 fungal-type). Over residues 43–53 (GIGDTCRDKER) the composition is skewed to basic and acidic residues. 2 disordered regions span residues 43–75 (GIGDTCRDKERKPRKRGPRKVKKEREVSASTKS) and 319–342 (QMASESKRHSANDTSPESQGGETV). Over residues 54-64 (KPRKRGPRKVK) the composition is skewed to basic residues. Over residues 330–339 (NDTSPESQGG) the composition is skewed to polar residues. One can recognise a PAS domain in the interval 444–516 (LLEYESMAKL…DIFHEYLAFG (73 aa)).

Belongs to the ERT1/acuK family.

The protein resides in the nucleus. Functionally, transcription factor which regulates nonfermentable carbon utilization. This is Glucose starvation modulator protein 1 (GSM1) from Kluyveromyces lactis (strain ATCC 8585 / CBS 2359 / DSM 70799 / NBRC 1267 / NRRL Y-1140 / WM37) (Yeast).